We begin with the raw amino-acid sequence, 208 residues long: Microtubule-associated protein Jupiter (208 aa).

Disordered stretches follow at residues 24–43 (RPPG…QTPR) and 82–106 (RGQK…PGKN). A Phosphoserine modification is found at Ser30. The residue at position 41 (Thr41) is a Phosphothreonine. The span at 82-93 (RGQKTVDSHSRL) shows a compositional bias: basic and acidic residues. Thr98 and Thr102 each carry phosphothreonine. A phosphoserine mark is found at Ser111, Ser139, and Ser150. Residues 132-208 (HYNGKSGSVS…PPGGYSSGLW (77 aa)) form a disordered region. The segment covering 137-150 (SGSVSSASSSVSSS) has biased composition (low complexity). Composition is skewed to polar residues over residues 151–165 (TENL…SEGN) and 178–189 (EYSQRQESSNGG).

This sequence belongs to the MAP Jupiter family. In terms of tissue distribution, ubiquitous expression throughout development. Expressed during cell division in the syncytial embryo. Expressed in developing photoreceptors of the eye imaginal disk of the third larval stage. In adults, highly expressed in neurons of the brain, concentrated in axons. In the adult ovaries, expression accumulates in the germarium and the polar follicular cells as well as in the oocyte along the microtubule network.

It is found in the nucleus. The protein localises to the cytoplasm. Its subcellular location is the cytoskeleton. It localises to the spindle. In terms of biological role, binds to all microtubule populations. The protein is Microtubule-associated protein Jupiter of Drosophila melanogaster (Fruit fly).